The chain runs to 305 residues: 4-diphosphocytidyl-2-C-methyl-D-erythritol kinase (305 aa).

The active site involves lysine 18. 103–113 (PYGAGLGGGSS) is a binding site for ATP. The active site involves aspartate 145.

Belongs to the GHMP kinase family. IspE subfamily.

The catalysed reaction is 4-CDP-2-C-methyl-D-erythritol + ATP = 4-CDP-2-C-methyl-D-erythritol 2-phosphate + ADP + H(+). It functions in the pathway isoprenoid biosynthesis; isopentenyl diphosphate biosynthesis via DXP pathway; isopentenyl diphosphate from 1-deoxy-D-xylulose 5-phosphate: step 3/6. Its function is as follows. Catalyzes the phosphorylation of the position 2 hydroxy group of 4-diphosphocytidyl-2C-methyl-D-erythritol. This is 4-diphosphocytidyl-2-C-methyl-D-erythritol kinase from Lawsonia intracellularis (strain PHE/MN1-00).